Here is a 95-residue protein sequence, read N- to C-terminus: Citrate lyase acyl carrier protein (95 aa).

An O-(phosphoribosyl dephospho-coenzyme A)serine modification is found at serine 14.

Belongs to the CitD family. In terms of assembly, oligomer with a subunit composition of (alpha,beta,gamma)6.

It localises to the cytoplasm. Its function is as follows. Covalent carrier of the coenzyme of citrate lyase. The polypeptide is Citrate lyase acyl carrier protein (Haemophilus influenzae (strain PittGG)).